A 255-amino-acid polypeptide reads, in one-letter code: Small ribosomal subunit protein uS2 (255 aa).

The protein belongs to the universal ribosomal protein uS2 family.

The polypeptide is Small ribosomal subunit protein uS2 (Streptococcus pyogenes serotype M3 (strain ATCC BAA-595 / MGAS315)).